We begin with the raw amino-acid sequence, 858 residues long: Phospholipase D gamma 1 (858 aa).

A C2 domain is found at 27–163; that stretch reads PFATSSGSLR…CSGNRIEGLF (137 aa). Aspartate 225 contributes to the Ca(2+) binding site. A PLD phosphodiesterase 1 domain is found at 364–399; sequence TIYTHHQKTVIVDAEAAQNRRKIVAFVGGLDLCNGR. Catalysis depends on residues histidine 369, lysine 371, and aspartate 376. Histidine 369 provides a ligand contact to a 1,2-diacyl-sn-glycero-3-phosphate. 2 residues coordinate Ca(2+): histidine 405 and histidine 437. Residue glutamine 565 coordinates a 1,2-diacyl-sn-glycero-3-phosphate. Serine 680 carries the post-translational modification Phosphoserine. The 28-residue stretch at 704–731 folds into the PLD phosphodiesterase 2 domain; sequence FMIYVHSKGMVVDDEFVLIGSANINQRS. Catalysis depends on residues histidine 709, lysine 711, and aspartate 716. Histidine 709 is an a 1,2-diacyl-sn-glycero-3-phosphate binding site. Glutamate 772 is a Ca(2+) binding site.

This sequence belongs to the phospholipase D family. C2-PLD subfamily. It depends on Ca(2+) as a cofactor. As to expression, highly expressed in roots and flowers, moderately in stems, leaves and seedlings and low in siliques. Not detected in seeds.

It is found in the cytoplasm. The protein localises to the membrane. The enzyme catalyses a 1,2-diacyl-sn-glycero-3-phosphocholine + H2O = a 1,2-diacyl-sn-glycero-3-phosphate + choline + H(+). With respect to regulation, inhibited by neomycin. Up-regulated by PIP2 binding. Functionally, hydrolyzes glycerol-phospholipids at the terminal phosphodiesteric bond to generate phosphatidic acids (PA). Plays an important role in various cellular processes, including phytohormone action, vesicular trafficking, secretion, cytoskeletal arrangement, meiosis, tumor promotion, pathogenesis, membrane deterioration and senescence. Can use phosphatidylserine (PS) and phosphatidylethanolamine (PE) as substrates only in the presence of PIP2. Can use phosphatidylcholine (PC), phosphatidylglycerol (PG) or N-acylphosphatidylethanolamine (NAPE) as substrates in the presence of PE and PIP2. Involved in membrane lipid modulation under aluminum (Al) stress and negatively modulate plant tolerance to Al. The sequence is that of Phospholipase D gamma 1 from Arabidopsis thaliana (Mouse-ear cress).